A 360-amino-acid polypeptide reads, in one-letter code: Histidinol-phosphate aminotransferase (360 aa).

K223 carries the post-translational modification N6-(pyridoxal phosphate)lysine.

This sequence belongs to the class-II pyridoxal-phosphate-dependent aminotransferase family. Histidinol-phosphate aminotransferase subfamily. As to quaternary structure, homodimer. Requires pyridoxal 5'-phosphate as cofactor.

The catalysed reaction is L-histidinol phosphate + 2-oxoglutarate = 3-(imidazol-4-yl)-2-oxopropyl phosphate + L-glutamate. It participates in amino-acid biosynthesis; L-histidine biosynthesis; L-histidine from 5-phospho-alpha-D-ribose 1-diphosphate: step 7/9. This chain is Histidinol-phosphate aminotransferase, found in Bacillus subtilis subsp. natto.